The chain runs to 359 residues: 4'-phosphopantetheinyl transferase A (359 aa).

The protein belongs to the P-Pant transferase superfamily.

The enzyme catalyses apo-[ACP] + CoA = holo-[ACP] + adenosine 3',5'-bisphosphate + H(+). Activity is inhibited bythe antifunfal copmpounds PD 404,182, 6-nitroso-1,2-benzopyrone, and calmidazolium chloride with IC(50) values of 3.9 uM, 35.2 uM, and 19.2 uM, respectively. Its function is as follows. Acyl-carrier-protein synthase that transfers the 4'-phosphopantetheine moiety from coenzyme A to a Ser of an acyl-carrier-protein. The 4'-phosphopantetheine (4'-PPT) portion of CoA provides the essential prosthetic group for a number of carrier proteins and multi-domain enzymes, priming them for the acceptance of acyl building blocks in fatty acid synthesis and many aspects of secondary metabolism mediated by polyketide synthases (PKSs) and non-ribosomal peptide synthetases (NRPSs). PptA is able to transfer the cofactor to a broad range of enzymes with acyl- or peptidyl-carrier protein domains and activates target enzymes involved in the synthesis of lysine, but also secondary metabolites including gliotoxin, fumigaclavine C, fumiquinazole A, fumiquinazoline C, pyripyroprene A, fumagillin, the siderophores triacetylfusarinine C (TAFC) and ferricrocin (FC), and dihydroxy naphthalene (DHN)-melanin. Plays an essential role in virulence. This Aspergillus fumigatus (strain ATCC MYA-4609 / CBS 101355 / FGSC A1100 / Af293) (Neosartorya fumigata) protein is 4'-phosphopantetheinyl transferase A.